A 670-amino-acid polypeptide reads, in one-letter code: DNA ligase (670 aa).

Residues 32 to 36, 81 to 82, and Glu-114 each bind NAD(+); these read DSEYD and SL. Lys-116 serves as the catalytic N6-AMP-lysine intermediate. Residues Arg-137, Glu-174, Lys-291, and Lys-315 each coordinate NAD(+). Cys-409, Cys-412, Cys-427, and Cys-433 together coordinate Zn(2+). The BRCT domain maps to 592 to 670; that stretch reads ASENLFKDKT…EEEFLAQITR (79 aa).

This sequence belongs to the NAD-dependent DNA ligase family. LigA subfamily. The cofactor is Mg(2+). It depends on Mn(2+) as a cofactor.

It catalyses the reaction NAD(+) + (deoxyribonucleotide)n-3'-hydroxyl + 5'-phospho-(deoxyribonucleotide)m = (deoxyribonucleotide)n+m + AMP + beta-nicotinamide D-nucleotide.. In terms of biological role, DNA ligase that catalyzes the formation of phosphodiester linkages between 5'-phosphoryl and 3'-hydroxyl groups in double-stranded DNA using NAD as a coenzyme and as the energy source for the reaction. It is essential for DNA replication and repair of damaged DNA. This is DNA ligase from Haemophilus influenzae (strain 86-028NP).